We begin with the raw amino-acid sequence, 87 residues long: Small ribosomal subunit protein bS20 (87 aa).

Residues methionine 1 to alanine 23 form a disordered region.

It belongs to the bacterial ribosomal protein bS20 family.

Its function is as follows. Binds directly to 16S ribosomal RNA. This chain is Small ribosomal subunit protein bS20, found in Oleidesulfovibrio alaskensis (strain ATCC BAA-1058 / DSM 17464 / G20) (Desulfovibrio alaskensis).